Consider the following 150-residue polypeptide: Transcriptional repressor NrdR (150 aa).

The segment at 3–34 is a zinc-finger region; sequence CPFCNFEESKVVDSRATDDNTTIRRRRECLNC. An ATP-cone domain is found at 49 to 139; sequence VLVVKKDLAR…VYRQFKDINT (91 aa).

Belongs to the NrdR family. It depends on Zn(2+) as a cofactor.

Functionally, negatively regulates transcription of bacterial ribonucleotide reductase nrd genes and operons by binding to NrdR-boxes. This is Transcriptional repressor NrdR from Clostridium botulinum (strain Eklund 17B / Type B).